We begin with the raw amino-acid sequence, 356 residues long: Peritrophin-44 (356 aa).

The first 23 residues, 1 to 23 (MKELQITTGCLLLMVAAIGKTSA), serve as a signal peptide directing secretion. Chitin-binding type-2 domains follow at residues 28-85 (SETC…KCIS), 88-146 (KNAC…ECTA), 147-201 (DSIC…PCLA), 220-283 (NFVC…PCTF), and 286-355 (CGNL…YKLC). Residues Cys-62 and Cys-75 are joined by a disulfide bond. The N-linked (GlcNAc...) asparagine glycan is linked to Asn-114. 3 disulfides stabilise this stretch: Cys-122–Cys-135, Cys-181–Cys-193, and Cys-262–Cys-273. Residue Asn-309 is glycosylated (N-linked (GlcNAc...) asparagine).

Post-translationally, glycosylated. In terms of tissue distribution, larval peritrophic membrane.

In terms of biological role, may have roles in the maintenance of peritrophic membrane structure and in the determination of the porosity of the peritrophic membrane. May bind chitin or related oligosaccharide structures. This chain is Peritrophin-44, found in Lucilia cuprina (Green bottle fly).